Reading from the N-terminus, the 239-residue chain is uncharacterized protein (239 aa).

3 consecutive transmembrane segments (helical) span residues 125–144 (LAIISFICSPSLSFFLLILY), 149–171 (IFVLFKLFAVEYVRYELVYFLFL), and 197–216 (SVLNLSVSVTILAVLQGILF).

It localises to the cell membrane. This is an uncharacterized protein from Aquifex aeolicus (strain VF5).